The following is a 192-amino-acid chain: tRNA (pseudouridine(54)-N(1))-methyltransferase (192 aa).

S-adenosyl-L-methionine-binding residues include Leu-114 and Gly-138.

It belongs to the methyltransferase superfamily. TrmY family. Homodimer.

The protein localises to the cytoplasm. The catalysed reaction is pseudouridine(54) in tRNA + S-adenosyl-L-methionine = N(1)-methylpseudouridine(54) in tRNA + S-adenosyl-L-homocysteine + H(+). Functionally, specifically catalyzes the N1-methylation of pseudouridine at position 54 (Psi54) in tRNAs. The protein is tRNA (pseudouridine(54)-N(1))-methyltransferase of Aeropyrum pernix (strain ATCC 700893 / DSM 11879 / JCM 9820 / NBRC 100138 / K1).